Consider the following 417-residue polypeptide: Serine hydroxymethyltransferase (417 aa).

Residues L121 and 125–127 each bind (6S)-5,6,7,8-tetrahydrofolate; that span reads GHL. K229 is modified (N6-(pyridoxal phosphate)lysine). Residue 355 to 357 participates in (6S)-5,6,7,8-tetrahydrofolate binding; sequence SPF.

Belongs to the SHMT family. In terms of assembly, homodimer. The cofactor is pyridoxal 5'-phosphate.

The protein resides in the cytoplasm. The catalysed reaction is (6R)-5,10-methylene-5,6,7,8-tetrahydrofolate + glycine + H2O = (6S)-5,6,7,8-tetrahydrofolate + L-serine. It participates in one-carbon metabolism; tetrahydrofolate interconversion. The protein operates within amino-acid biosynthesis; glycine biosynthesis; glycine from L-serine: step 1/1. Catalyzes the reversible interconversion of serine and glycine with tetrahydrofolate (THF) serving as the one-carbon carrier. This reaction serves as the major source of one-carbon groups required for the biosynthesis of purines, thymidylate, methionine, and other important biomolecules. Also exhibits THF-independent aldolase activity toward beta-hydroxyamino acids, producing glycine and aldehydes, via a retro-aldol mechanism. The chain is Serine hydroxymethyltransferase from Buchnera aphidicola subsp. Acyrthosiphon pisum (strain 5A).